We begin with the raw amino-acid sequence, 144 residues long: UPF0102 protein BTH_I3148 (144 aa).

The interval 1-20 is disordered; the sequence is MCHARAARQATGEAEAAPRD.

It belongs to the UPF0102 family.

The protein is UPF0102 protein BTH_I3148 of Burkholderia thailandensis (strain ATCC 700388 / DSM 13276 / CCUG 48851 / CIP 106301 / E264).